A 311-amino-acid polypeptide reads, in one-letter code: MDYRHDLIIKLYDALIKNGFNVSEPDLYGLVTFDLICRRNDEKYIIKVLYNIDTFSRLSISSLMAMASVTKSSIIVIGEKSGSGRLEDGILYYRHHIPIMSFKTFIDYINGESPYIYSAPGGYYVSIDGDKMRRIRELKGYSVGYLSSKLGISRRSISLYESGSSATIDIYLKLEETLGEDLTKDIDIRNEKYDYNIKDDIKDVFIRETFQMLSALGYSYEYIKKSPFDGFSYDPETMFMLGIFNNYMENERIISIKKISQVLNNIPLIIQKEYTEKENIYGCPVVSISELRSMGSMYAFKKLVEKRYSYD.

The HTH cro/C1-type domain occupies Met-132–Ile-186. Positions Val-143–Ser-162 form a DNA-binding region, H-T-H motif.

The polypeptide is Putative HTH-type transcriptional regulatory protein PTO0557 (Picrophilus torridus (strain ATCC 700027 / DSM 9790 / JCM 10055 / NBRC 100828 / KAW 2/3)).